A 337-amino-acid chain; its full sequence is Glycerol-3-phosphate dehydrogenase [NAD(P)+] 2 (337 aa).

Residues T11, W12, and K105 each coordinate NADPH. The sn-glycerol 3-phosphate site is built by K105, G139, and T141. A143 is an NADPH binding site. Sn-glycerol 3-phosphate is bound by residues K194, D247, S257, R258, and N259. Residue K194 is the Proton acceptor of the active site. Residue R258 participates in NADPH binding. NADPH-binding residues include V282 and E284.

The protein belongs to the NAD-dependent glycerol-3-phosphate dehydrogenase family.

It localises to the cytoplasm. It carries out the reaction sn-glycerol 3-phosphate + NAD(+) = dihydroxyacetone phosphate + NADH + H(+). It catalyses the reaction sn-glycerol 3-phosphate + NADP(+) = dihydroxyacetone phosphate + NADPH + H(+). Its pathway is membrane lipid metabolism; glycerophospholipid metabolism. Catalyzes the reduction of the glycolytic intermediate dihydroxyacetone phosphate (DHAP) to sn-glycerol 3-phosphate (G3P), the key precursor for phospholipid synthesis. The protein is Glycerol-3-phosphate dehydrogenase [NAD(P)+] 2 of Lactobacillus delbrueckii subsp. bulgaricus (strain ATCC 11842 / DSM 20081 / BCRC 10696 / JCM 1002 / NBRC 13953 / NCIMB 11778 / NCTC 12712 / WDCM 00102 / Lb 14).